A 669-amino-acid polypeptide reads, in one-letter code: Cell surface receptor daf-1 (669 aa).

A signal peptide spans 1-19 (MRIRHVVFCLLALVYGAET). Residues 20–170 (SDDDLDERTN…APGPQQSSTW (151 aa)) lie on the Extracellular side of the membrane. N-linked (GlcNAc...) asparagine glycosylation is found at Asn-49, Asn-79, Asn-133, and Asn-154. Residues 171 to 191 (LILTILALLTFIVLLGIAIFL) traverse the membrane as a helical segment. At 192-669 (TRKSWEAKFD…NDDSSRPLLG (478 aa)) the chain is on the cytoplasmic side. In terms of domain architecture, GS spans 262–292 (NNMKDMLDVLEETSGSGMGPTTLHKLTIGGQ). Residues 293–593 (IRLTGRVGSG…KRMDERQQLL (301 aa)) enclose the Protein kinase domain. ATP is bound by residues 299 to 307 (VGSGRFGNV) and Lys-320. The active-site Proton acceptor is the Asp-423. Basic and acidic residues-rich tracts occupy residues 611–624 (DRKI…KDES) and 633–650 (VQKE…RETA). Residues 611-669 (DRKILGPQKPKDESPANGAPRIVQKEIDREDEQENWRETAKTPNGHISSNDDSSRPLLG) are disordered. The span at 651–661 (KTPNGHISSND) shows a compositional bias: polar residues.

Belongs to the protein kinase superfamily. TKL Ser/Thr protein kinase family. TGFB receptor subfamily. As to quaternary structure, may interact with daf-4 to regulate dauer larva development. In terms of tissue distribution, head and ventral nerve cord from embryos to adults. Expressed in many sensory neurons. Subset of head neurons show coexpression with daf-4 when dauer/nondauer decision is made. Also expressed in non-neuronal cells: membraneous sheath surrounding the distal end of the intestine and in the distal tip cell of the gonad.

The protein localises to the membrane. It catalyses the reaction L-threonyl-[receptor-protein] + ATP = O-phospho-L-threonyl-[receptor-protein] + ADP + H(+). The catalysed reaction is L-seryl-[receptor-protein] + ATP = O-phospho-L-seryl-[receptor-protein] + ADP + H(+). Functionally, probably involved in a TGF-beta pathway. May be a receptor for TGF-beta-like ligand daf-7. Controls the decision of whether or not larvae enter a developmentally arrested state, known as dauer, in response to environmental conditions. Involved in regulating entry into quiescence triggered by satiety. Involved in sensitivity to CO2 levels. In AWC neurons, acts to promote expression of srsx-3, a member of the GPCR family. This Caenorhabditis elegans protein is Cell surface receptor daf-1 (daf-1).